Consider the following 108-residue polypeptide: UPF0145 protein Npun_F4817 (108 aa).

It belongs to the UPF0145 family.

This Nostoc punctiforme (strain ATCC 29133 / PCC 73102) protein is UPF0145 protein Npun_F4817.